Here is a 63-residue protein sequence, read N- to C-terminus: Large ribosomal subunit protein uL29 (63 aa).

The protein belongs to the universal ribosomal protein uL29 family.

This is Large ribosomal subunit protein uL29 from Actinobacillus pleuropneumoniae serotype 5b (strain L20).